The primary structure comprises 297 residues: Formylmethanofuran--tetrahydromethanopterin formyltransferase (297 aa).

This sequence belongs to the FTR family. As to quaternary structure, homotetramer.

It is found in the cytoplasm. It carries out the reaction N-formylmethanofuran + 5,6,7,8-tetrahydromethanopterin + H(+) = N(5)-formyl-5,6,7,8-tetrahydromethanopterin + methanofuran. It functions in the pathway one-carbon metabolism; methanogenesis from CO(2); 5,10-methenyl-5,6,7,8-tetrahydromethanopterin from CO(2): step 2/3. In terms of biological role, catalyzes the reversible transfer of a formyl group from formylmethanofuran (formyl-MFR) to tetrahydromethanopterin (H(4)MPT) to produce 5-formyl tetrahydromethanopterin (5-formyl-H(4)MPT) and methanofuran (MFR). The protein is Formylmethanofuran--tetrahydromethanopterin formyltransferase of Methanosarcina acetivorans (strain ATCC 35395 / DSM 2834 / JCM 12185 / C2A).